The sequence spans 236 residues: UPF0257 lipoprotein YnfC (236 aa).

An N-terminal signal peptide occupies residues 1 to 16 (MKYKLLPCLLAILLTG). Cysteine 17 is lipidated: N-palmitoyl cysteine. Cysteine 17 carries S-diacylglycerol cysteine lipidation.

This sequence belongs to the UPF0257 family.

It localises to the cell membrane. The protein is UPF0257 lipoprotein YnfC of Escherichia coli O127:H6 (strain E2348/69 / EPEC).